Here is a 756-residue protein sequence, read N- to C-terminus: Rab11 family-interacting protein 3 (756 aa).

Over residues 1–24 (MASAPPASPPGSEPPGPDPEPGGP) the composition is skewed to pro residues. Residues 1–204 (MASAPPASPP…SEPVGSQEDG (204 aa)) are disordered. The tract at residues 2–435 (ASAPPASPPG…RLSSKKVARY (434 aa)) is important for binding to DYNC1LI1. Low complexity predominate over residues 27-39 (PGAAQLAPGPAEL). Ser-52 carries the post-translational modification Phosphoserine. Low complexity predominate over residues 53–68 (PGLDEPAPGAAADGGA). Pro residues predominate over residues 84 to 94 (DPGPSAPPPRS). Ser-102 is subject to Phosphoserine; by CDK1. EF-hand domains follow at residues 202–237 (EDGPRLRAVFDALDGDGDGFVRIEDFIQFATVYGAE) and 234–269 (YGAEQVKDLTKYLDPSGLGVISFEDFYQGITAIRNG). Residues Asp-215, Asp-217, Asp-219, Asp-226, Asp-247, Ser-249, and Asp-258 each contribute to the Ca(2+) site. Phosphoserine occurs at positions 281, 348, 488, 538, 647, and 648. Residues 484-588 (GEQHSRLRQE…LLDEIESLTL (105 aa)) form an ARF-binding domain (ABD) region. Positions 485–694 (EQHSRLRQEN…NGQIITLSIQ (210 aa)) form a coiled coil. The disordered stretch occupies residues 645–664 (RSSSMGLQEYHSRARESELE). Residues 654-664 (YHSRARESELE) are compositionally biased toward basic and acidic residues. Residues 694–756 (QGAKSLFSTA…ETNPSILEVK (63 aa)) enclose the FIP-RBD domain.

In terms of assembly, homodimer. Interacts with RAB11A; the interaction is direct and is required for the recruitment to endosomes. Interacts with RAB11B. Forms a ternary complex with RAB11A and dynein intermediate chain DYNC1LI1; RAB11FIP3 links RAB11A to dynein and the interaction regulates endocytic trafficking. Interacts with dynein intermediate chain and dynactin (DCTN1); the interaction activates dynein processivity. Interacts with ARF6 and EXOC7; the interaction serves for recruitment and tethering of recycling endosomes-derived vesicles to the cleavage furrow/midbody. Interacts with RACGAP1/MgcRacGAP; the interaction occurs at late telophase and is required for recruitment and tethering of recycling endosomes-derived vesicles to the cleavage furrow/midbody. Forms a complex with RAB11A and Rabin8/RAB3IP, probably a heterohexamer with two of each protein subunit, where RAB3IP and RAB11FIP3 simultaneously bind to RAB11A; the complex promotes preciliary trafficking. Forms a complex containing RAB11A, ASAP1, RAB3IP, RAP11FIP3 and ARF4; the complex promotes preciliary trafficking; the complex binds to RHO in photoreceptor cells and promotes RHO ciliary transport. Interacts with RAB11FIP4. Interacts with RAB25. Post-translationally, phosphorylated at Ser-102 by CDK1 during metaphase, and dephosphorylated as cells enter telophase.

The protein resides in the endosome membrane. It localises to the recycling endosome membrane. Its subcellular location is the cytoplasm. The protein localises to the cytoskeleton. It is found in the microtubule organizing center. The protein resides in the centrosome. It localises to the cleavage furrow. Its subcellular location is the midbody. The protein localises to the golgi apparatus membrane. It is found in the golgi apparatus. The protein resides in the trans-Golgi network membrane. Functionally, downstream effector molecule for Rab11 GTPase which is involved in endocytic trafficking, cytokinesis and intracellular ciliogenesis by participating in membrane delivery. Recruited by Rab11 to endosomes where it links Rab11 to dynein motor complex. The functional Rab11-RAB11FIP3-dynein complex regulates the movement of peripheral sorting endosomes (SE) along microtubule tracks toward the microtubule organizing center/centrosome, generating the endocytic recycling compartment (ERC) during interphase of cell cycle. Facilitates the interaction between dynein and dynactin and activates dynein processivity. Binding with ASAP1 is needed to regulate the pericentrosomal localization of recycling endosomes. The Rab11-RAB11FIP3 complex is also implicated in the transport during telophase of vesicles derived from recycling endosomes to the cleavage furrow via centrosome-anchored microtubules, where the vesicles function to deliver membrane during late cytokinesis and abscission. The recruitment of Rab11-RAB11FIP3-containing endosomes to the cleavage furrow and tethering to the midbody is co-mediated by RAB11FIP3 interaction with ARF6-exocyst and RACGAP1-MKLP1 tethering complexes. Also involved in the Rab11-Rabin8-Rab8 ciliogenesis cascade by facilitating the orderly assembly of a ciliary targeting complex containing Rab11, ASAP1, Rabin8/RAB3IP, RAB11FIP3 and ARF4, which directs preciliary vesicle trafficking to mother centriole and ciliogenesis initiation. Also promotes the activity of Rab11 and ASAP1 in the ARF4-dependent Golgi-to-cilia transport of the sensory receptor rhodopsin. Competes with WDR44 for binding to Rab11, which controls intracellular ciliogenesis pathway. May play a role in breast cancer cell motility by regulating actin cytoskeleton. The chain is Rab11 family-interacting protein 3 from Homo sapiens (Human).